Reading from the N-terminus, the 447-residue chain is Na(+)-translocating NADH-quinone reductase subunit A (447 aa).

It belongs to the NqrA family. Composed of six subunits; NqrA, NqrB, NqrC, NqrD, NqrE and NqrF.

It catalyses the reaction a ubiquinone + n Na(+)(in) + NADH + H(+) = a ubiquinol + n Na(+)(out) + NAD(+). Functionally, NQR complex catalyzes the reduction of ubiquinone-1 to ubiquinol by two successive reactions, coupled with the transport of Na(+) ions from the cytoplasm to the periplasm. NqrA to NqrE are probably involved in the second step, the conversion of ubisemiquinone to ubiquinol. The protein is Na(+)-translocating NADH-quinone reductase subunit A of Saccharophagus degradans (strain 2-40 / ATCC 43961 / DSM 17024).